An 82-amino-acid chain; its full sequence is MAHTVKIYDTCIGCTQCVRACPTDVLEMVPWKGNNKAGMIAAAPRTEDCVGCKRCETACPTDFLSIRVYLGPETTRSMGLAY.

2 consecutive 4Fe-4S ferredoxin-type domains span residues 2 to 31 and 40 to 69; these read AHTV…MVPW and IAAA…IRVY. Positions 11, 14, 17, 21, 49, 52, 55, and 59 each coordinate [4Fe-4S] cluster.

The cyanobacterial PSI reaction center is composed of one copy each of PsaA,B,C,D,E,F,I,J,K,L,M and X, and forms trimeric complexes. The cofactor is [4Fe-4S] cluster.

It is found in the cellular thylakoid membrane. It carries out the reaction reduced [plastocyanin] + hnu + oxidized [2Fe-2S]-[ferredoxin] = oxidized [plastocyanin] + reduced [2Fe-2S]-[ferredoxin]. Its function is as follows. Apoprotein for the two 4Fe-4S centers FA and FB of photosystem I (PSI); essential for photochemical activity. FB is the terminal electron acceptor of PSI, donating electrons to ferredoxin. The C-terminus interacts with PsaA/B/D and helps assemble the protein into the PSI complex. Required for binding of PsaD and PsaE to PSI. PSI is a plastocyanin/cytochrome c6-ferredoxin oxidoreductase, converting photonic excitation into a charge separation, which transfers an electron from the donor P700 chlorophyll pair to the spectroscopically characterized acceptors A0, A1, FX, FA and FB in turn. The polypeptide is Photosystem I iron-sulfur center (Synechococcus sp. (strain JA-3-3Ab) (Cyanobacteria bacterium Yellowstone A-Prime)).